Reading from the N-terminus, the 599-residue chain is Elongation factor 4 (599 aa).

Residues 2–184 (KNIRNFSIIA…RLVRDIPPPQ (183 aa)) form the tr-type G domain. Residues 14 to 19 (DHGKST) and 131 to 134 (NKID) each bind GTP.

Belongs to the TRAFAC class translation factor GTPase superfamily. Classic translation factor GTPase family. LepA subfamily.

It localises to the cell inner membrane. The catalysed reaction is GTP + H2O = GDP + phosphate + H(+). In terms of biological role, required for accurate and efficient protein synthesis under certain stress conditions. May act as a fidelity factor of the translation reaction, by catalyzing a one-codon backward translocation of tRNAs on improperly translocated ribosomes. Back-translocation proceeds from a post-translocation (POST) complex to a pre-translocation (PRE) complex, thus giving elongation factor G a second chance to translocate the tRNAs correctly. Binds to ribosomes in a GTP-dependent manner. The chain is Elongation factor 4 from Salmonella agona (strain SL483).